A 137-amino-acid chain; its full sequence is Gonadotropin subunit beta-1 (137 aa).

The first 24 residues, 1-24 (MYCTHLRMLQLVVMATLWVTPVRA), serve as a signal peptide directing secretion. 5 cysteine pairs are disulfide-bonded: Cys32–Cys78, Cys46–Cys93, Cys55–Cys108, Cys59–Cys110, and Cys113–Cys120. An N-linked (GlcNAc...) asparagine glycan is attached at Asn36.

It belongs to the glycoprotein hormones subunit beta family. As to quaternary structure, heterodimer of an alpha and a beta chain.

The protein resides in the secreted. In terms of biological role, involved in gametogenesis and steroidogenesis. The chain is Gonadotropin subunit beta-1 (cgba) from Coregonus autumnalis (Arctic cisco).